Consider the following 248-residue polypeptide: 7-cyano-7-deazaguanine synthase (248 aa).

An ATP-binding site is contributed by 22–32; sequence LSGGLDSTTCL. Zn(2+) is bound by residues cysteine 216, cysteine 225, cysteine 228, and cysteine 231.

This sequence belongs to the QueC family. Zn(2+) serves as cofactor.

It carries out the reaction 7-carboxy-7-deazaguanine + NH4(+) + ATP = 7-cyano-7-deazaguanine + ADP + phosphate + H2O + H(+). Its pathway is purine metabolism; 7-cyano-7-deazaguanine biosynthesis. Functionally, catalyzes the ATP-dependent conversion of 7-carboxy-7-deazaguanine (CDG) to 7-cyano-7-deazaguanine (preQ(0)). In Leptospira biflexa serovar Patoc (strain Patoc 1 / Ames), this protein is 7-cyano-7-deazaguanine synthase.